A 401-amino-acid polypeptide reads, in one-letter code: Protein-glutamate methylesterase/protein-glutamine glutaminase (401 aa).

The Response regulatory domain maps to 16–134 (RVLVIDDSAV…LAGAEEFRRD (119 aa)). A 4-aspartylphosphate modification is found at aspartate 67. The disordered stretch occupies residues 146–208 (PIPPVPTQRD…PQGRGTPRNT (63 aa)). 2 stretches are compositionally biased toward low complexity: residues 166-176 (AAPGAPVARSI) and 185-199 (SAPA…AQPP). Residues 205 to 400 (PRNTARPEII…PGIVRRAKGG (196 aa)) form the CheB-type methylesterase domain. Catalysis depends on residues serine 219, histidine 246, and aspartate 342.

Belongs to the CheB family. Phosphorylated by CheA. Phosphorylation of the N-terminal regulatory domain activates the methylesterase activity.

It localises to the cytoplasm. It carries out the reaction [protein]-L-glutamate 5-O-methyl ester + H2O = L-glutamyl-[protein] + methanol + H(+). The catalysed reaction is L-glutaminyl-[protein] + H2O = L-glutamyl-[protein] + NH4(+). Functionally, involved in chemotaxis. Part of a chemotaxis signal transduction system that modulates chemotaxis in response to various stimuli. Catalyzes the demethylation of specific methylglutamate residues introduced into the chemoreceptors (methyl-accepting chemotaxis proteins or MCP) by CheR. Also mediates the irreversible deamidation of specific glutamine residues to glutamic acid. This is Protein-glutamate methylesterase/protein-glutamine glutaminase from Maricaulis maris (strain MCS10) (Caulobacter maris).